Reading from the N-terminus, the 559-residue chain is Nicotinate phosphoribosyltransferase 1 (559 aa).

2 residues coordinate nicotinate: Tyr-33 and Thr-221. His-224 carries the phosphohistidine modification. Arg-331 contributes to the nicotinate binding site. Thr-393 contacts 5-phospho-alpha-D-ribose 1-diphosphate.

This sequence belongs to the NAPRTase family. Requires Mg(2+) as cofactor. Mn(2+) serves as cofactor. In terms of processing, transiently phosphorylated on a His residue during the reaction cycle. Phosphorylation strongly increases the affinity for substrates and increases the rate of nicotinate D-ribonucleotide production. Dephosphorylation regenerates the low-affinity form of the enzyme, leading to product release.

The enzyme catalyses nicotinate + 5-phospho-alpha-D-ribose 1-diphosphate + ATP + H2O = nicotinate beta-D-ribonucleotide + ADP + phosphate + diphosphate. Its pathway is cofactor biosynthesis; NAD(+) biosynthesis; nicotinate D-ribonucleotide from nicotinate: step 1/1. Catalyzes the first step in the biosynthesis of NAD from nicotinic acid, the ATP-dependent synthesis of beta-nicotinate D-ribonucleotide from nicotinate and 5-phospho-D-ribose 1-phosphate. Helps prevent cellular oxidative stress via its role in NAD biosynthesis. This chain is Nicotinate phosphoribosyltransferase 1, found in Arabidopsis thaliana (Mouse-ear cress).